The sequence spans 406 residues: Flavohemoprotein (406 aa).

Residues 6–144 (VLLDKKTTEI…IADIFISVEK (139 aa)) enclose the Globin domain. His-91 is a binding site for heme b. Active-site charge relay system residues include Tyr-101 and Glu-143. Positions 155–406 (GGWTGFRDFK…LFGPLEPIAK (252 aa)) are reductase. In terms of domain architecture, FAD-binding FR-type spans 158-267 (TGFRDFKVIK…SAPAGDFILD (110 aa)). Residues Tyr-196 and 212 to 215 (RQYS) each bind FAD. Residue 280–285 (GVGLTP) participates in NADP(+) binding. Residue 397 to 400 (LFGP) participates in FAD binding.

It belongs to the globin family. Two-domain flavohemoproteins subfamily. In the C-terminal section; belongs to the flavoprotein pyridine nucleotide cytochrome reductase family. Heme b serves as cofactor. Requires FAD as cofactor.

The enzyme catalyses 2 nitric oxide + NADPH + 2 O2 = 2 nitrate + NADP(+) + H(+). The catalysed reaction is 2 nitric oxide + NADH + 2 O2 = 2 nitrate + NAD(+) + H(+). Functionally, is involved in NO detoxification in an aerobic process, termed nitric oxide dioxygenase (NOD) reaction that utilizes O(2) and NAD(P)H to convert NO to nitrate, which protects the bacterium from various noxious nitrogen compounds. Therefore, plays a central role in the inducible response to nitrosative stress. This Oceanobacillus iheyensis (strain DSM 14371 / CIP 107618 / JCM 11309 / KCTC 3954 / HTE831) protein is Flavohemoprotein.